The following is a 321-amino-acid chain: MPVKIPDNLPAAEILESENIFVMSETRAANQDIRPMKVLILNLMPNKIETETQLLRLLGNTPLQVDVDLLRIHDKVSKHTSIDHMNNFYRDFEAVRHKNYDGLIITGAPLGQIEFEEVTYWDHIREIIDWSQHHVTSVLFLCWAAHAALYHLYGLQRKLLSAKRSGVFNHQRTHKHFPLLRGFDDEFFAPHSRFAEMEVADLKAHKELQVLAESDEAGAYLVLSRNNRNLFVMGHPEYQKSTLKDEYQRDLAEGLNPRVPKNYFRGDDPSQAPVARWHGHGSLLVSNWLNYYVYQLTPYDLHDMSAITPWEHEYKDAEDND.

Cys142 functions as the Acyl-thioester intermediate in the catalytic mechanism. 2 residues coordinate substrate: Lys163 and Ser192. His235 (proton acceptor) is an active-site residue. The active site involves Glu237. Residue Arg249 coordinates substrate.

The protein belongs to the MetA family.

It is found in the cytoplasm. The catalysed reaction is L-homoserine + succinyl-CoA = O-succinyl-L-homoserine + CoA. The protein operates within amino-acid biosynthesis; L-methionine biosynthesis via de novo pathway; O-succinyl-L-homoserine from L-homoserine: step 1/1. Transfers a succinyl group from succinyl-CoA to L-homoserine, forming succinyl-L-homoserine. This Shewanella loihica (strain ATCC BAA-1088 / PV-4) protein is Homoserine O-succinyltransferase.